The primary structure comprises 169 residues: S-ribosylhomocysteine lyase (169 aa).

Residues histidine 54, histidine 58, and cysteine 128 each coordinate Fe cation.

Belongs to the LuxS family. Homodimer. It depends on Fe cation as a cofactor.

It catalyses the reaction S-(5-deoxy-D-ribos-5-yl)-L-homocysteine = (S)-4,5-dihydroxypentane-2,3-dione + L-homocysteine. Its function is as follows. Involved in the synthesis of autoinducer 2 (AI-2) which is secreted by bacteria and is used to communicate both the cell density and the metabolic potential of the environment. The regulation of gene expression in response to changes in cell density is called quorum sensing. Catalyzes the transformation of S-ribosylhomocysteine (RHC) to homocysteine (HC) and 4,5-dihydroxy-2,3-pentadione (DPD). The polypeptide is S-ribosylhomocysteine lyase (Shewanella piezotolerans (strain WP3 / JCM 13877)).